A 4092-amino-acid polypeptide reads, in one-letter code: Dynein heavy chain, cytoplasmic (4092 aa).

Positions 1–1757 (MCKNEARLAN…FISQSGYLLQ (1757 aa)) are stem. Coiled coils occupy residues 154–175 (VETIDKTRRKLDDISKQFQQLH), 486–508 (KLEQAESEFSKNMLDLEKKLQNT), 542–566 (KVLENQQILLLEIKKDIRQLETGLE), 932–959 (VIKLKDDIQNCIEQVQNLHCKINSYVKE), 1042–1063 (YERDARKLHEDMNRDREAVEDM), and 1681–1705 (KGLLDKLNKSSDNVKKKIEALLVEY). AAA stretches follow at residues 1758 to 1979 (YKFE…VLRN), 2036 to 2273 (QCLK…NDLV), 2379 to 2628 (SLEA…LVRG), and 2722 to 2984 (TFCD…KVGV). ATP contacts are provided by residues 1796–1803 (GPAGTGKT), 2074–2081 (GKAGCGKT), 2418–2425 (GPPGSGKT), and 2760–2767 (GASRTGKT). Coiled-coil stretches lie at residues 2993 to 3092 (IDGL…KRKE), 3242 to 3300 (KTKA…KSLT), and 3532 to 3608 (ITLT…EEFF). A stalk region spans residues 2993–3300 (IDGLRALVKL…RSISLVKSLT (308 aa)). AAA stretches follow at residues 3370–3599 (LVTL…NIEK) and 3760–3970 (LNWF…YLEN).

It belongs to the dynein heavy chain family. The dynein complex consists of at least two heavy chains and a number of intermediate and light chains. Interacts with DYN3.

The protein resides in the cytoplasm. It localises to the cytoskeleton. Functionally, cytoplasmic dynein acts as a motor for the intracellular retrograde motility of vesicles and organelles along microtubules. Dynein has ATPase activity; the force-producing power stroke is thought to occur on release of ADP. Required to maintain uniform nuclear distribution in hyphae. May play an important role in the proper orientation of the mitotic spindle into the budding daughter cell yeast. Probably required for normal progression of the cell cycle. The protein is Dynein heavy chain, cytoplasmic (DYN1) of Saccharomyces cerevisiae (strain ATCC 204508 / S288c) (Baker's yeast).